The chain runs to 205 residues: Lipoprotein MlpB (205 aa).

The N-terminal stretch at 1–17 (MKIINILFCLLLIVLNS) is a signal peptide. A lipid anchor (N-palmitoyl cysteine) is attached at Cys18. Cys18 carries the S-diacylglycerol cysteine lipid modification.

It belongs to the Multicopy lipoprotein (Mlp) family.

It localises to the cell outer membrane. In terms of biological role, an outer membrane protein that may participate in pathogenesis. Some human Lyme disease patients have antibodies against this protein. The Mlp proteins probably undergo intragenic recombination, generating new alleles. The polypeptide is Lipoprotein MlpB (Borreliella burgdorferi (strain ATCC 35210 / DSM 4680 / CIP 102532 / B31) (Borrelia burgdorferi)).